Reading from the N-terminus, the 184-residue chain is RNA 2',3'-cyclic phosphodiesterase (184 aa).

H40 acts as the Proton donor in catalysis. Short sequence motifs (HXTX) lie at residues 40–43 and 125–128; these read HITL. The active-site Proton acceptor is the H125.

The protein belongs to the 2H phosphoesterase superfamily. ThpR family.

The enzyme catalyses a 3'-end 2',3'-cyclophospho-ribonucleotide-RNA + H2O = a 3'-end 2'-phospho-ribonucleotide-RNA + H(+). In terms of biological role, hydrolyzes RNA 2',3'-cyclic phosphodiester to an RNA 2'-phosphomonoester. In vitro, ligates 5' and 3' half-tRNA molecules with 2',3'-cyclic phosphate and 5'-hydroxyl termini, respectively, to the product containing the 2'-5' phosphodiester linkage. Ligase activity requires GTP, but GTP hydrolysis is not required for the reaction, which is reversible. Ligase activity is weak compared to the phosphodiesterase activity. The sequence is that of RNA 2',3'-cyclic phosphodiesterase from Pyrococcus furiosus (strain ATCC 43587 / DSM 3638 / JCM 8422 / Vc1).